The following is a 202-amino-acid chain: Ribonuclease HII (202 aa).

An RNase H type-2 domain is found at 1–195 (MIVAGVDEVG…PELKGGSPAG (195 aa)). A divalent metal cation-binding residues include Asp-7, Glu-8, and Asp-103.

The protein belongs to the RNase HII family. It depends on Mn(2+) as a cofactor. Requires Mg(2+) as cofactor.

It localises to the cytoplasm. It carries out the reaction Endonucleolytic cleavage to 5'-phosphomonoester.. Endonuclease that specifically degrades the RNA of RNA-DNA hybrids. The polypeptide is Ribonuclease HII (Synechococcus sp. (strain RCC307)).